Here is an 82-residue protein sequence, read N- to C-terminus: Mu-conotoxin MrVIA (82 aa).

The N-terminal stretch at 1–22 is a signal peptide; it reads MKLTCMMIVAVLFLTAWTLVMA. Positions 23 to 49 are excised as a propeptide; sequence DDSNNGLANHFSKSRDEMEDPEASKLE. 3 disulfide bridges follow: Cys53–Cys71, Cys60–Cys76, and Cys70–Cys81.

In terms of tissue distribution, expressed by the venom duct.

It localises to the secreted. In terms of biological role, muO-conotoxins are gating-modifier toxins that inhibit sodium current by trapping the domain II voltage sensor in the closed position to prevent opening of the sodium channel. This toxin inhibits rNav1.2/SCN2A (IC(50)=532 nM), rNav1.4/SCN4A (IC(50)=438 nM) and rNav1.7/SCN9A (IC(50)=345 nM). It blocks Nav channels by interacting mainly with the C-terminal part of the pore loop of domain-3. It does not bind on site 1. At small concentration, this toxin also acts as a calcium current agonist, whereas at higher doses it blocks fast-inactivating calcium current. This is Mu-conotoxin MrVIA from Conus marmoreus (Marble cone).